A 520-amino-acid chain; its full sequence is Cytochrome P450 monooxygenase 98 (520 aa).

The helical transmembrane segment at 7–27 (MLNNNLLIVIGTFAVCVYIVL) threads the bilayer. A heme-binding site is contributed by Cys445.

Belongs to the cytochrome P450 family. Heme serves as cofactor.

The protein resides in the membrane. It participates in secondary metabolite biosynthesis. In terms of biological role, cytochrome P450 monooxygenase that is able to use pyrene, phenanthrene, 3,5-dimethoxy-trans-stilbene and 3,5,4'-trimethoxy-trans-stilbene as substrates for oxidation. This is Cytochrome P450 monooxygenase 98 from Postia placenta (strain ATCC 44394 / Madison 698-R) (Brown rot fungus).